The following is a 269-amino-acid chain: 23S rRNA (adenosine(1067)-2'-O)-methyltransferase (269 aa).

Residues arginine 135, arginine 165, leucine 195, glycine 218, isoleucine 238, and leucine 247 each contribute to the S-adenosyl-L-methionine site.

This sequence belongs to the class IV-like SAM-binding methyltransferase superfamily. RNA methyltransferase TsnR/AvirB family. As to quaternary structure, homodimer.

It carries out the reaction adenosine(1067) in 23S rRNA + S-adenosyl-L-methionine = 2'-O-methyladenosine(1067) in 23S rRNA + S-adenosyl-L-homocysteine + H(+). Functionally, specifically methylates the adenosine-1067 in 23S ribosomal RNA. Confers resistance to antibiotic thiostrepton. The chain is 23S rRNA (adenosine(1067)-2'-O)-methyltransferase (tsnR) from Streptomyces azureus.